We begin with the raw amino-acid sequence, 82 residues long: Putative ribonuclease VapC34 (82 aa).

Aspartate 4 contributes to the Mg(2+) binding site.

It belongs to the PINc/VapC protein family. The cofactor is Mg(2+).

Toxic component of a possible type II toxin-antitoxin (TA) system. A putative RNase. Its cognate antitoxin is VapB34. This is Putative ribonuclease VapC34 (vapC34) from Mycobacterium tuberculosis (strain CDC 1551 / Oshkosh).